A 338-amino-acid polypeptide reads, in one-letter code: Methionine synthase (338 aa).

Positions 210, 212, 234, and 294 each coordinate Zn(2+).

It belongs to the archaeal MetE family. Zn(2+) is required as a cofactor.

Its pathway is amino-acid biosynthesis; L-methionine biosynthesis via de novo pathway. Catalyzes the transfer of a methyl group to L-homocysteine resulting in methionine formation. The physiological methyl donor is unknown. The sequence is that of Methionine synthase from Pyrococcus furiosus (strain ATCC 43587 / DSM 3638 / JCM 8422 / Vc1).